We begin with the raw amino-acid sequence, 179 residues long: uncharacterized protein (179 aa).

It localises to the plastid. Its subcellular location is the cyanelle. This is an uncharacterized protein from Cyanophora paradoxa.